Reading from the N-terminus, the 921-residue chain is Inter-alpha-trypsin inhibitor heavy chain H4 (921 aa).

Positions 1-27 are cleaved as a signal peptide; sequence MKTLSPTGYGLLLVLPLLLAVLQSTTA. One can recognise a VIT domain in the interval 28–146; sequence HKNDINIYSL…KVTFELVYEE (119 aa). Asn-80, Asn-205, and Asn-242 each carry an N-linked (GlcNAc...) asparagine glycan. A VWFA domain is found at 270 to 428; sequence PKNVIFVIDT…YAFLEKMALE (159 aa). Residues Asn-513 and Asn-577 are each glycosylated (N-linked (GlcNAc...) asparagine). Positions 591–646 are disordered; it reads KPEGQEQSQVAEKPVENGNRQGNTHSGHSSFQFHSVGDRTSRLTGGSSVDPVFSHR. Positions 608-623 are enriched in polar residues; sequence GNRQGNTHSGHSSFQF. O-linked (GalNAc...) threonine glycosylation occurs at Thr-712. A disulfide bridge links Cys-738 with Cys-916.

This sequence belongs to the ITIH family. In terms of assembly, interacts (via C-terminus) with DNAJC1 (via SANT 2 domain). In terms of processing, appears to be both N- and O-glycosylated. Post-translationally, cleaved by plasma kallikrein to yield 55- and 25-kDa fragments. As to expression, liver specific.

Its subcellular location is the secreted. Functionally, type II acute-phase protein (APP) involved in inflammatory responses to trauma. May also play a role in liver development or regeneration. The sequence is that of Inter-alpha-trypsin inhibitor heavy chain H4 (ITIH4) from Sus scrofa (Pig).